The chain runs to 156 residues: Small ribosomal subunit protein uS7 (156 aa).

It belongs to the universal ribosomal protein uS7 family. As to quaternary structure, part of the 30S ribosomal subunit. Contacts proteins S9 and S11.

Functionally, one of the primary rRNA binding proteins, it binds directly to 16S rRNA where it nucleates assembly of the head domain of the 30S subunit. Is located at the subunit interface close to the decoding center, probably blocks exit of the E-site tRNA. This is Small ribosomal subunit protein uS7 from Acidithiobacillus ferrooxidans (strain ATCC 53993 / BNL-5-31) (Leptospirillum ferrooxidans (ATCC 53993)).